Reading from the N-terminus, the 559-residue chain is Suppressor of tumorigenicity 7 protein-like (559 aa).

3 helical membrane passes run 39 to 59 (GLAN…LYAL), 83 to 103 (FYVA…IFEW), and 513 to 533 (LPFF…IALL).

This sequence belongs to the ST7 family.

It is found in the membrane. This is Suppressor of tumorigenicity 7 protein-like (St7l) from Rattus norvegicus (Rat).